The following is a 288-amino-acid chain: Diaminopimelate epimerase (288 aa).

Residues N14 and N67 each coordinate substrate. C76 serves as the catalytic Proton donor. Substrate-binding positions include 77 to 78, N166, N199, and 217 to 218; these read GN and ER. The Proton acceptor role is filled by C226. 227–228 contributes to the substrate binding site; it reads GT.

It belongs to the diaminopimelate epimerase family. As to quaternary structure, homodimer.

It is found in the cytoplasm. The catalysed reaction is (2S,6S)-2,6-diaminopimelate = meso-2,6-diaminopimelate. Its pathway is amino-acid biosynthesis; L-lysine biosynthesis via DAP pathway; DL-2,6-diaminopimelate from LL-2,6-diaminopimelate: step 1/1. Its function is as follows. Catalyzes the stereoinversion of LL-2,6-diaminopimelate (L,L-DAP) to meso-diaminopimelate (meso-DAP), a precursor of L-lysine and an essential component of the bacterial peptidoglycan. The chain is Diaminopimelate epimerase from Bacillus cereus (strain AH820).